The sequence spans 149 residues: Stathmin (149 aa).

A2 carries the post-translational modification N-acetylalanine. S4 is subject to Phosphoserine. Residues 4–145 (SDIQVKELEK…NKESKDPADE (142 aa)) form the SLD domain. K9 bears the N6-acetyllysine mark. S16 is subject to Phosphoserine. S25 carries the post-translational modification Phosphoserine; by CDK1, MAPK1 and MAPK3. The residue at position 29 (K29) is an N6-methyllysine. Position 31 is a phosphoserine (S31). S38 bears the Phosphoserine; by CDK1, MAPK1 and MAPK3 mark. Positions 41-140 (KKKDLSLEEI…EEVRKNKESK (100 aa)) form a coiled coil. The residue at position 63 (S63) is a Phosphoserine; by PKA. N6-acetyllysine occurs at positions 100 and 119. A compositionally biased stretch (basic and acidic residues) spans 121–143 (ERLREKDKHIEEVRKNKESKDPA). The disordered stretch occupies residues 121-149 (ERLREKDKHIEEVRKNKESKDPADETEAD).

This sequence belongs to the stathmin family. In terms of assembly, binds to two alpha/beta-tubulin heterodimers. Interacts with KIST. Post-translationally, many different phosphorylated forms are observed depending on specific combinations among the sites which can be phosphorylated. MAPK is responsible for the phosphorylation of stathmin in response to NGF. Phosphorylation at Ser-16 seems to be required for neuron polarization.

The protein resides in the cytoplasm. The protein localises to the cytoskeleton. Involved in the regulation of the microtubule (MT) filament system by destabilizing microtubules. Prevents assembly and promotes disassembly of microtubules. Its phosphorylation at Ser-16 may be required for axon formation during neurogenesis. Involved in the control of the learned and innate fear. The chain is Stathmin (STMN1) from Bos taurus (Bovine).